The sequence spans 1088 residues: MLFLRLFIFTPFLILANCQARRTIKVGLLFVQNVSSLQVGIGYRTSAAAVLVTKNKIREDHVLDGFDFEFLWDFDECNEILGAGKTVDLLEVKKVDVIFGPTCSRPALISSALATYYNIPIFEWGLTSTRQLTDVKRFPTTLPFSVNSYSLAMAILGTLKQFQWTEFVFLYCNDGDDEKCESLKDDVQTVASAHEELSLAYTFRIQSKKLEDMRAAIVEIKKRGRIIVACVASGNGSKRTLMQAVALENANNSEYVYIMAETNSRGFVVEEVGGKWHYLWEGKFDDSDTFSTEDSRTSMANLLFLVDNMGMNNVVTPQYLNFSKNVIEMMKDEPFNCVEDCVGEEYSSVAKYAGQLADAFYAYAVAVNRLLTANPQAEIRNGTMILRNIGMTFEGVGGGDLTVDPDSARTSEIIMIGLNSSRLPETYGKLIINNQSVHFEQLYSDEVMDVWNGRQRPKAKPTCGFTGTQCPPDFVRDYLVIVIIIVMFLIFAVSAAVGAVFYAIRQKRKEIERQDELWHVEASHLKPISKKSKSEASQRSFASGPSTSTKLTVESRTETTRFIFYIYQVRNNEVVAANKHDFRPQLTDVERSELRQMRSLDHDNLNKFIGLCLNSQQLLSIWRYCSRGSLADVISRSSMQMDSFFMLSLIRDIANGLGFIHTSMLHFHGYLSSRSCLIDDRWQVKISDFGLNEVRGMDKLSTENMLWWAPEVLRGLEQRSKEADIYSFGIICSEVITRSSAFDLENRKEKPEEIIYQLKKGGFNAIRPSLLTDEALEINPALVHLIRDCWTEKPSERPPIDQVRSLLRGMNDGKKGNLMDHVFNMLETYASTLEEEVNERTKELVEEQKKSDVLLYRMLPKTVAEKLKAGISIEPETFELVTIFFSDVVQFTTLASKCTPLQVVQLLNDLYTIFDSIIEQNDVYKVETIGDGYLCVSGLPHRNGHDHIKHIARMSLAFLSSLAEFRVAHMPSERINLRIGINCGSVVAGVVGLTMPRYCLFGDAVNTASRMESNGKPGRIHVSSEANHLLTHVVGGFRTEERGEVIIKGKGVMNTYWLLGENDSVPVKSNMRKRENTPSMARSITPEI.

The first 20 residues, 1 to 20, serve as a signal peptide directing secretion; the sequence is MLFLRLFIFTPFLILANCQA. Over 21 to 480 the chain is Extracellular; it reads RRTIKVGLLF…PPDFVRDYLV (460 aa). 7 N-linked (GlcNAc...) asparagine glycosylation sites follow: asparagine 33, asparagine 235, asparagine 251, asparagine 321, asparagine 381, asparagine 419, and asparagine 434. A helical membrane pass occupies residues 481 to 501; that stretch reads IVIIIVMFLIFAVSAAVGAVF. Topologically, residues 502–1088 are cytoplasmic; that stretch reads YAIRQKRKEI…SMARSITPEI (587 aa). The interval 529-552 is disordered; that stretch reads SKKSKSEASQRSFASGPSTSTKLT. Over residues 535–552 the composition is skewed to polar residues; that stretch reads EASQRSFASGPSTSTKLT. Residues 535–824 enclose the Protein kinase domain; it reads EASQRSFASG…KGNLMDHVFN (290 aa). The stretch at 826 to 854 forms a coiled coil; sequence LETYASTLEEEVNERTKELVEEQKKSDVL. Residues 882–1012 form the Guanylate cyclase domain; it reads TIFFSDVVQF…DAVNTASRME (131 aa). Residues 1069–1088 form a disordered region; it reads SNMRKRENTPSMARSITPEI.

It belongs to the adenylyl cyclase class-4/guanylyl cyclase family. Expressed in PHA sensory neurons.

It is found in the cell membrane. It carries out the reaction GTP = 3',5'-cyclic GMP + diphosphate. Its function is as follows. Guanylate cyclase involved in the production of the second messenger cGMP. In Caenorhabditis elegans, this protein is Receptor-type guanylate cyclase gcy-17.